We begin with the raw amino-acid sequence, 357 residues long: Alanine racemase (357 aa).

Catalysis depends on Lys33, which acts as the Proton acceptor; specific for D-alanine. An N6-(pyridoxal phosphate)lysine modification is found at Lys33. Residue Arg130 participates in substrate binding. Tyr252 (proton acceptor; specific for L-alanine) is an active-site residue. Substrate is bound at residue Met300.

It belongs to the alanine racemase family. Pyridoxal 5'-phosphate serves as cofactor.

It catalyses the reaction L-alanine = D-alanine. Its pathway is amino-acid biosynthesis; D-alanine biosynthesis; D-alanine from L-alanine: step 1/1. Functionally, catalyzes the interconversion of L-alanine and D-alanine. May also act on other amino acids. The protein is Alanine racemase (alr) of Acidiphilium cryptum (strain JF-5).